A 416-amino-acid chain; its full sequence is FBD-associated F-box protein At3g52670 (416 aa).

An F-box domain is found at 9–62 (EDRMNQLPEDLILRILSFLPTELVIATSVLSKQWRSLWKLVPNLEFDSDDYESE). Residues 327–378 (KWNEPKYVPECLLSHLETFVWIRYDWEREEEKEVATYILRNARWLKKGTIST) enclose the FBD domain.

The polypeptide is FBD-associated F-box protein At3g52670 (Arabidopsis thaliana (Mouse-ear cress)).